The chain runs to 550 residues: Rhodopsin kinase grk7-b (550 aa).

A disordered region spans residues 22–45 (SSEGDAKELQKRRKSLSLPPPDVS). Ser36 bears the Phosphoserine mark. The region spanning 57 to 174 (YQSICVEQPI…QNSPFYDRFL (118 aa)) is the RGS domain. Residues 189–451 (FYEFRILGKG…DDDPRKHAFF (263 aa)) form the Protein kinase domain. ATP is bound by residues 195 to 203 (LGKGGFGEV) and Lys218. Asp314 (proton acceptor) is an active-site residue. In terms of domain architecture, AGC-kinase C-terminal spans 452-517 (KSINFQRLEA…GAVPISWQKE (66 aa)). Phosphoserine is present on Ser487. A disordered region spans residues 531-550 (SREVTGGGNSGEKSGVCSIL). At Cys547 the chain carries Cysteine methyl ester. The S-geranylgeranyl cysteine moiety is linked to residue Cys547. The propeptide at 548–550 (SIL) is removed in mature form.

The protein belongs to the protein kinase superfamily. AGC Ser/Thr protein kinase family. GPRK subfamily. Autophosphorylated in vitro at Ser-487. Phosphorylation at Ser-36 is regulated by light and activated by cAMP. As to expression, retina, cones.

The protein localises to the membrane. It carries out the reaction L-threonyl-[rhodopsin] + ATP = O-phospho-L-threonyl-[rhodopsin] + ADP + H(+). The enzyme catalyses L-seryl-[rhodopsin] + ATP = O-phospho-L-seryl-[rhodopsin] + ADP + H(+). Its function is as follows. Retina-specific kinase involved in the shutoff of the photoresponse and adaptation to changing light conditions via cone opsin phosphorylation, including rhodopsin (RHO). In Xenopus laevis (African clawed frog), this protein is Rhodopsin kinase grk7-b (grk7-b).